The following is a 325-amino-acid chain: MNSVEIIGTGSYVPEKIVTNEDMSKIVDTSDEWISSRTGIKERRISINENTSDLGAKAALRAIEDSNIKPEEIDLIIVATTSPDSYTPSVACIVQEKIGAKNAACFDLNAACTGFIFALNTASQFIKTGEYKTALVVGTEVLSKILDWQDRGTCVLFGDGAGAVIIRGGDENGIIKACLGSDGTGKDFLHCPATNVINPFSDEKGLASSKISMNGREVFKFAVKVMVSSVKKVIEDSGLNIEDIDYIVPHQANIRIIEFAAKKLGLSMDKFFINLQNYGNTSGATIPLAIDEMNKKGLLKRGAKIVVVGFGGGLTWGSMVLKWTK.

Active-site residues include C112 and H250. Positions 251–255 (QANIR) are ACP-binding. N280 is an active-site residue.

This sequence belongs to the thiolase-like superfamily. FabH family. As to quaternary structure, homodimer.

Its subcellular location is the cytoplasm. It carries out the reaction malonyl-[ACP] + acetyl-CoA + H(+) = 3-oxobutanoyl-[ACP] + CO2 + CoA. It functions in the pathway lipid metabolism; fatty acid biosynthesis. Catalyzes the condensation reaction of fatty acid synthesis by the addition to an acyl acceptor of two carbons from malonyl-ACP. Catalyzes the first condensation reaction which initiates fatty acid synthesis and may therefore play a role in governing the total rate of fatty acid production. Possesses both acetoacetyl-ACP synthase and acetyl transacylase activities. Its substrate specificity determines the biosynthesis of branched-chain and/or straight-chain of fatty acids. This is Beta-ketoacyl-[acyl-carrier-protein] synthase III from Clostridium acetobutylicum (strain ATCC 824 / DSM 792 / JCM 1419 / IAM 19013 / LMG 5710 / NBRC 13948 / NRRL B-527 / VKM B-1787 / 2291 / W).